The chain runs to 337 residues: Glyceraldehyde-3-phosphate dehydrogenase 1, cytosolic (337 aa).

Residues 13–14 (RI), Asp35, and Arg82 contribute to the NAD(+) site. D-glyceraldehyde 3-phosphate contacts are provided by residues 153–155 (SCT), Thr184, 213–214 (TG), and Arg236. Catalysis depends on Cys154, which acts as the Nucleophile. Asn318 provides a ligand contact to NAD(+).

Belongs to the glyceraldehyde-3-phosphate dehydrogenase family. As to quaternary structure, homotetramer. Phosphorylated after gibberellin treatment.

Its subcellular location is the cytoplasm. The catalysed reaction is D-glyceraldehyde 3-phosphate + phosphate + NAD(+) = (2R)-3-phospho-glyceroyl phosphate + NADH + H(+). It participates in carbohydrate degradation; glycolysis; pyruvate from D-glyceraldehyde 3-phosphate: step 1/5. Functionally, key enzyme in glycolysis that catalyzes the first step of the pathway by converting D-glyceraldehyde 3-phosphate (G3P) into 3-phospho-D-glyceroyl phosphate. Essential for the maintenance of cellular ATP levels and carbohydrate metabolism. The protein is Glyceraldehyde-3-phosphate dehydrogenase 1, cytosolic (GAPC1) of Oryza sativa subsp. japonica (Rice).